Here is a 460-residue protein sequence, read N- to C-terminus: Elongation factor 1-alpha (460 aa).

At G2 the chain carries N,N,N-trimethylglycine. Position 3 is an N6,N6-dimethyllysine; alternate (K3). K3 bears the N6-methyllysine; alternate mark. A tr-type G domain is found at K6–T241. Positions G15–S22 are G1. G15–S22 is a binding site for GTP. The segment at G71–D75 is G2. Position 80 is an N6,N6,N6-trimethyllysine (K80). The tract at residues D92 to G95 is G3. Residues D92–H96 and N154–D157 contribute to the GTP site. Positions N154–D157 are G4. The tract at residues S193 to F195 is G5. K317 carries the N6,N6-dimethyllysine; alternate modification. Residue K317 is modified to N6-methyllysine; alternate. K391 is subject to N6-methyllysine.

The protein belongs to the TRAFAC class translation factor GTPase superfamily. Classic translation factor GTPase family. EF-Tu/EF-1A subfamily.

The protein resides in the cytoplasm. Its function is as follows. This protein promotes the GTP-dependent binding of aminoacyl-tRNA to the A-site of ribosomes during protein biosynthesis. This chain is Elongation factor 1-alpha (tef1), found in Hypocrea jecorina (Trichoderma reesei).